The following is a 547-amino-acid chain: Chaperonin GroEL 1 (547 aa).

ATP contacts are provided by residues threonine 30–proline 33, lysine 51, aspartate 87–threonine 91, glycine 415, and aspartate 496.

It belongs to the chaperonin (HSP60) family. In terms of assembly, forms a cylinder of 14 subunits composed of two heptameric rings stacked back-to-back. Interacts with the co-chaperonin GroES.

The protein resides in the cytoplasm. The catalysed reaction is ATP + H2O + a folded polypeptide = ADP + phosphate + an unfolded polypeptide.. Functionally, together with its co-chaperonin GroES, plays an essential role in assisting protein folding. The GroEL-GroES system forms a nano-cage that allows encapsulation of the non-native substrate proteins and provides a physical environment optimized to promote and accelerate protein folding. The polypeptide is Chaperonin GroEL 1 (Rhodopseudomonas palustris (strain BisB5)).